A 354-amino-acid polypeptide reads, in one-letter code: MSQSTYSLEQLADFLKVEFQGNGATLLSGVEEIEEAKTAHITFLDNEKYAKHLKSSEAGAIIISRTQFQKYRDLNKNFLITSESPSLVFQKCLELFITPVDSGFPGIHPTAVIHPTAIIEDHVCIEPYAVVCQHAHVGSACHIGSGSVIGAYSTVGEHSYIHPRVVIRERVSIGKRVIIQPGAVIGSCGFGYVTSAFGQHKHLKHLGKVIIEDDVEIGANTTIDRGRFKHSVVREGSKIDNLVQIAHQVEVGQHSMIVAQAGIAGSTKIGNHVIIGGQAGITGHICIADHVIMMAQTGVTKSITSPGIYGGAPARPYQEIHRQVAKVRNLPRLEERIAALEKLVQKLEALSEQH.

Catalysis depends on His-247, which acts as the Proton acceptor.

Belongs to the transferase hexapeptide repeat family. LpxD subfamily. As to quaternary structure, homotrimer.

The enzyme catalyses a UDP-3-O-[(3R)-3-hydroxyacyl]-alpha-D-glucosamine + a (3R)-hydroxyacyl-[ACP] = a UDP-2-N,3-O-bis[(3R)-3-hydroxyacyl]-alpha-D-glucosamine + holo-[ACP] + H(+). Its pathway is bacterial outer membrane biogenesis; LPS lipid A biosynthesis. Its function is as follows. Catalyzes the N-acylation of UDP-3-O-acylglucosamine using 3-hydroxyacyl-ACP as the acyl donor. Is involved in the biosynthesis of lipid A, a phosphorylated glycolipid that anchors the lipopolysaccharide to the outer membrane of the cell. This Chlamydia trachomatis serovar A (strain ATCC VR-571B / DSM 19440 / HAR-13) protein is UDP-3-O-acylglucosamine N-acyltransferase.